A 411-amino-acid chain; its full sequence is Dihydrosphingosine 1-phosphate phosphatase C823.11 (411 aa).

Residues 1 to 74 are Lumenal-facing; it reads MVHKKKNVDI…LDVYFMYTAT (74 aa). Residues 75 to 95 form a helical membrane-spanning segment; sequence LGTHVFFMLALPIFFWSGCIY. Residues 96 to 99 are Cytoplasmic-facing; sequence YTLD. The helical transmembrane segment at 100–120 threads the bilayer; it reads ITQLFAAGVYFSGCIKDYFCL. Residues 115–123 are phosphatase sequence motif I; sequence KDYFCLPRP. The Lumenal portion of the chain corresponds to 121 to 170; it reads PRPRSPPMVRLTLSSDAEYEYGFPSTHTTNAMATGFYSLFLLLSMSDSMS. The interval 144-147 is phosphatase sequence motif II; sequence PSTH. The Proton donor role is filled by His147. Residues 171 to 191 form a helical membrane-spanning segment; sequence SISYYFLLSLVLLYIASISLG. The segment at 191–202 is phosphatase sequence motif III; that stretch reads GRIYCGMHGFMD. Residues 192–195 lie on the Cytoplasmic side of the membrane; the sequence is RIYC. Residues 196-216 form a helical membrane-spanning segment; the sequence is GMHGFMDVSTGTILGVTLAIF. His198 functions as the Nucleophile in the catalytic mechanism. Over 217–233 the chain is Lumenal; it reads QWKYADFFHNVWSSSST. Residues 234 to 254 form a helical membrane-spanning segment; that stretch reads SVPILSVVLALFFIWFHPQPA. Topologically, residues 255 to 259 are cytoplasmic; sequence ERCIC. Residues 260–280 form a helical membrane-spanning segment; the sequence is LEDSISFISVIMGIDLGTWFA. The Lumenal segment spans residues 281 to 293; that stretch reads SPESLSHLHDNLN. The helical transmembrane segment at 294-314 threads the bilayer; it reads SYFLLKFFVRVLFGVCMILIW. The Cytoplasmic segment spans residues 315 to 387; it reads KSFAKQALLA…VRFDIETIAR (73 aa). A helical membrane pass occupies residues 388-408; sequence IIVYSGIGFLCTYFAPKVFLK. Residues 409 to 411 are Lumenal-facing; that stretch reads WKI.

This sequence belongs to the type 2 lipid phosphate phosphatase family.

It localises to the endoplasmic reticulum membrane. In terms of biological role, dihydrosphingosine 1-phosphate phosphatase required for efficient ceramide synthesis from exogenous sphingoid bases. Involved in endocytosis and calcium-mediated signaling. The polypeptide is Dihydrosphingosine 1-phosphate phosphatase C823.11 (Schizosaccharomyces pombe (strain 972 / ATCC 24843) (Fission yeast)).